The chain runs to 183 residues: Seminal plasma protein BSP-30 kDa (183 aa).

The first 25 residues, 1 to 25, serve as a signal peptide directing secretion; it reads MAPLVGLFLIWAGASVFQQLHPVNG. A disordered region spans residues 23 to 47; the sequence is VNGGDIPDPGSKPTPPGMADELPTE. O-linked (GalNAc...) threonine glycans are attached at residues Thr36, Thr46, Thr57, Thr58, Thr59, and Thr64. 2 consecutive Fibronectin type-II domains span residues 92–136 and 137–183; these read FEGP…FCTE and RDEP…WKYC. Intrachain disulfides connect Cys97–Cys121, Cys111–Cys134, Cys142–Cys168, and Cys156–Cys183.

Belongs to the seminal plasma protein family.

Its subcellular location is the secreted. In terms of biological role, binds to spermatozoa upon ejaculation and may play a role in sperm capacitation. Displays heparin-, gelatin- and phospholipid-binding activities. The chain is Seminal plasma protein BSP-30 kDa from Bos taurus (Bovine).